We begin with the raw amino-acid sequence, 317 residues long: GPI-specific phospholipase A2-like PGAP3 (317 aa).

An N-terminal signal peptide occupies residues 1–18 (MAPFLVLFLAGVVSASRG). At 19-93 (DREPVYRDCV…QFHGKWPFSR (75 aa)) the chain is on the lumenal side. N-linked (GlcNAc...) asparagine glycosylation occurs at Asn35. The helical transmembrane segment at 94-114 (FLFFQEPASALASFLNGVASL) threads the bilayer. At 115-132 (LMLFRYRSSVPSSCQMYR) the chain is on the cytoplasmic side. A helical transmembrane segment spans residues 133–153 (TCLAFSMVSVNAWFWSTIFHT). Over 154 to 163 (RDTALTEKMD) the chain is Lumenal. A helical transmembrane segment spans residues 164–180 (YFCASSVILHSIYLCCM). The Cytoplasmic portion of the chain corresponds to 181–189 (RTFGLQYPS). A helical membrane pass occupies residues 190–210 (IANAFGAFLVLLFACHISYLT). Residues 211–219 (LGRFDYSYN) lie on the Lumenal side of the membrane. The chain crosses the membrane as a helical span at residues 220–240 (MAANTSFGIVNLMWWLAWCMW). Topologically, residues 241-251 (RRFHQPYLWKC) are cytoplasmic. Residues 252–272 (VLVVVLLQSLALLELLDFPPV) form a helical membrane-spanning segment. Position 273 (Met273) is a topological domain, lumenal. The chain crosses the membrane as a helical span at residues 274 to 293 (WILDAHALWHFSTIPLHFLF). The Cytoplasmic portion of the chain corresponds to 294–317 (YSFLRDDSLYLLKVNHDDDIPKLD).

This sequence belongs to the PGAP3 family.

It is found in the golgi apparatus membrane. Functionally, involved in the fatty acid remodeling steps of GPI-anchor maturation where the unsaturated acyl chain at sn-2 of inositol phosphate is replaced by a saturated stearoyl chain. May catalyze the first step of the fatty acid remodeling, by removing the unsaturated acyl chain at sn-2 of inositol phosphate, generating a lyso-GPI intermediate. The fatty acid remodeling steps is critical for the integration of GPI-APs into lipid rafts. The protein is GPI-specific phospholipase A2-like PGAP3 of Xenopus laevis (African clawed frog).